The primary structure comprises 141 residues: Large ribosomal subunit protein uL11 (141 aa).

It belongs to the universal ribosomal protein uL11 family. In terms of assembly, part of the ribosomal stalk of the 50S ribosomal subunit. Interacts with L10 and the large rRNA to form the base of the stalk. L10 forms an elongated spine to which L12 dimers bind in a sequential fashion forming a multimeric L10(L12)X complex. One or more lysine residues are methylated.

Forms part of the ribosomal stalk which helps the ribosome interact with GTP-bound translation factors. In Chlorobium phaeobacteroides (strain BS1), this protein is Large ribosomal subunit protein uL11.